A 1356-amino-acid polypeptide reads, in one-letter code: Serine/threonine-protein kinase PSK1 (1356 aa).

S10 is subject to Phosphoserine. Residues 20–115 (KHAITHKGTS…SVDSTVSSPL (96 aa)) are disordered. Composition is skewed to polar residues over residues 26–37 (KGTSSSVASLQT) and 54–64 (YDTSLSDVSTP). The span at 99-115 (LPSTASSSVDSTVSSPL) shows a compositional bias: low complexity. Phosphoserine occurs at positions 192, 202, 255, 286, and 327. A PAS 1 domain is found at 450 to 518 (RTFTSTKNSA…VLHKLLSTEG (69 aa)). Low complexity predominate over residues 592–608 (PTLSSSSTLSLPKMASS). Disordered stretches follow at residues 592–612 (PTLSSSSTLSLPKMASSPTGS) and 627–660 (YTKPTSTENRNGDENQLDGDSHSEPSLSSSPVRS). Residues 738-807 (LKLKIHSLPY…FINDKYPALD (70 aa)) form the PAS 2 domain. S926 bears the Phosphoserine mark. Residues 948–972 (DSRAHSQSTLSEQEQVPLENDKDSG) form a disordered region. A compositionally biased stretch (polar residues) spans 952 to 961 (HSQSTLSEQE). Phosphoserine occurs at positions 1018, 1023, 1035, and 1055. Over residues 1021–1032 (TESLADSKSSGK) the composition is skewed to polar residues. Residues 1021 to 1066 (TESLADSKSSGKGLSPLEEEKLIDENATENGLAGSPKDEDGIIMTN) form a disordered region. T1079 carries the post-translational modification Phosphothreonine. The 259-residue stretch at 1096-1354 (FVSLQKMGEG…IDDINNDKWL (259 aa)) folds into the Protein kinase domain. Residues 1102–1110 (MGEGAYGKV) and K1125 contribute to the ATP site. D1230 functions as the Proton acceptor in the catalytic mechanism.

It belongs to the protein kinase superfamily. Ser/Thr protein kinase family.

It localises to the cytoplasm. It carries out the reaction L-seryl-[protein] + ATP = O-phospho-L-seryl-[protein] + ADP + H(+). The catalysed reaction is L-threonyl-[protein] + ATP = O-phospho-L-threonyl-[protein] + ADP + H(+). In terms of biological role, serine/threonine-protein kinase involved in the control of sugar metabolism and translation. Phosphorylates UGP1, which is required for normal glycogen and beta-(1,6)-glucan synthesis. This phosphorylation shifts glucose partitioning toward cell wall glucan synthesis at the expense of glycogen synthesis. This Saccharomyces cerevisiae (strain ATCC 204508 / S288c) (Baker's yeast) protein is Serine/threonine-protein kinase PSK1 (PSK1).